Reading from the N-terminus, the 197-residue chain is Peptidyl-tRNA hydrolase (197 aa).

Y18 is a tRNA binding site. The Proton acceptor role is filled by H23. Residues Y68, N70, and N116 each coordinate tRNA.

This sequence belongs to the PTH family. Monomer.

Its subcellular location is the cytoplasm. It carries out the reaction an N-acyl-L-alpha-aminoacyl-tRNA + H2O = an N-acyl-L-amino acid + a tRNA + H(+). Hydrolyzes ribosome-free peptidyl-tRNAs (with 1 or more amino acids incorporated), which drop off the ribosome during protein synthesis, or as a result of ribosome stalling. Functionally, catalyzes the release of premature peptidyl moieties from peptidyl-tRNA molecules trapped in stalled 50S ribosomal subunits, and thus maintains levels of free tRNAs and 50S ribosomes. The protein is Peptidyl-tRNA hydrolase of Desulfotalea psychrophila (strain LSv54 / DSM 12343).